The following is a 343-amino-acid chain: Heat-inducible transcription repressor HrcA (343 aa).

The protein belongs to the HrcA family.

Negative regulator of class I heat shock genes (grpE-dnaK-dnaJ and groELS operons). Prevents heat-shock induction of these operons. This chain is Heat-inducible transcription repressor HrcA, found in Bacillus cytotoxicus (strain DSM 22905 / CIP 110041 / 391-98 / NVH 391-98).